The sequence spans 709 residues: MREDHSPRRNNTIENTLTELLPNRLYFGCFPNPDAIDKSDKSVKKTCFININNKFHYEPFYEDFGPWNLSVLYRLCVQVGKLLEVEEKRSRRVVLFCQDDGTGQYDKIRVNTAYVLGAYLIIYQGFSADDAYLKVSSGETVKFVGFRDASMGSPQYLLHLHDVLRGIEKALKFGWLDFSDFDYEEYEFYERVENGDFNWIIPGKILSFCGPHNESREENGYPYHAPDVYFDYFRENKVSTIVRLNAKNYDASKFTKAGFDHVDLFFIDGSTPSDEIMLKFIKVVDNTKGGVAVHCKAGLGRTGTLIACWMMKEYGLTAGECMGWLRVCRPGSVIGPQQPYLIEKQKFCWSLSQSNGVHLTQNKEEKRNVRRLVNQVDDINLGEERISPKSRENTRPNILRRRVQVQNGRSTAPVTIAPAGTSESRRSTKPSRVVDETALDDQGRSQGDRLLQLKAKHQHESETTSPNSSSSRRFVKSSTPQMTVPSQAYLNRNREPIIVTPSKNGTSSGTSSRQLKTTPNGNVAYRTRNSSGNTTSTLTRTGNESYRFHNSLFYEPASAVFPSMASRRSETTRYLSPTTPIKPMSPSYTDGTSPRYKARLRSENPIGSTTSTPFSLQPQITKCSLTAESKPPKRILSMPGTSKSTSSLKKIQVSRPRPYPSTGVRVELCANGKSYDIRPRKEAHVIPGAGLAANTEALLGVCKLVNTLS.

Positions 196–354 (DFNWIIPGKI…QKFCWSLSQS (159 aa)) constitute a Tyrosine-protein phosphatase domain. The active-site Phosphocysteine intermediate is cysteine 295. Positions 366–371 (KRNVRR) match the Nuclear localization signal motif. The Nuclear export signal signature appears at 372–381 (LVNQVDDINL). 3 disordered regions span residues 403-541 (VQVQ…LTRT), 573-594 (RYLS…GTSP), and 628-661 (ESKP…PYPS). A compositionally biased stretch (polar residues) spans 404-413 (QVQNGRSTAP). Low complexity predominate over residues 463 to 479 (TTSPNSSSSRRFVKSST). 2 stretches are compositionally biased toward polar residues: residues 480 to 490 (PQMTVPSQAYL) and 501 to 521 (PSKN…TPNG). The span at 526–541 (RTRNSSGNTTSTLTRT) shows a compositional bias: low complexity. The segment covering 639–649 (PGTSKSTSSLK) has biased composition (polar residues).

The protein belongs to the protein-tyrosine phosphatase family. Non-receptor class CDC14 subfamily.

It localises to the cytoplasm. Its subcellular location is the cytoskeleton. It is found in the microtubule organizing center. The protein resides in the centrosome. The protein localises to the spindle. It localises to the midbody. Its subcellular location is the nucleus. It carries out the reaction O-phospho-L-tyrosyl-[protein] + H2O = L-tyrosyl-[protein] + phosphate. With respect to regulation, inhibited by sodium orthovanadate. Weakly inhibited by sodium fluoride and okadaic acid. Protein phosphatase that negatively regulates the G1-to-S phase transition to inhibit the cell cycle and establish quiescence in cells of multiple lineages including vulval, hypodermal and intestinal. Promotes nuclear accumulation and activity of the cyclin-dependent kinase inhibitor cki-1 which leads to inhibition of G1 progression during vulval tissue development. Has been shown to not be required for cytokinesis. However, in the embryo, in a contrasting study, has been shown to act as a regulator of central spindle formation and cytokinesis, and may be required for localization of the spindle component zen-4, and its interacting partner air-2 at the spindle during late cell divisions. Its function is as follows. Main regulator of cell cycle arrest in vulval precursor cells. The chain is Tyrosine-protein phosphatase cdc-14 from Caenorhabditis elegans.